Consider the following 115-residue polypeptide: Putative septation protein SpoVG (115 aa).

A disordered region spans residues 88 to 115; the sequence is PGTIATSEVSSQLEESDSDKTLSEDLKA. The segment covering 91 to 100 has biased composition (polar residues); that stretch reads IATSEVSSQL. Residues 105–115 are compositionally biased toward basic and acidic residues; the sequence is SDKTLSEDLKA.

It belongs to the SpoVG family.

In terms of biological role, could be involved in septation. This chain is Putative septation protein SpoVG, found in Macrococcus caseolyticus (strain JCSC5402) (Macrococcoides caseolyticum).